Reading from the N-terminus, the 227-residue chain is Orotidine 5'-phosphate decarboxylase (227 aa).

Residues aspartate 8, lysine 30, 59-68 (DLKLYDIPNT), threonine 118, arginine 178, glutamine 187, glycine 207, and arginine 208 each bind substrate. Lysine 61 acts as the Proton donor in catalysis.

Belongs to the OMP decarboxylase family. Type 1 subfamily. As to quaternary structure, homodimer.

It carries out the reaction orotidine 5'-phosphate + H(+) = UMP + CO2. It participates in pyrimidine metabolism; UMP biosynthesis via de novo pathway; UMP from orotate: step 2/2. Catalyzes the decarboxylation of orotidine 5'-monophosphate (OMP) to uridine 5'-monophosphate (UMP). The chain is Orotidine 5'-phosphate decarboxylase from Sulfurimonas denitrificans (strain ATCC 33889 / DSM 1251) (Thiomicrospira denitrificans (strain ATCC 33889 / DSM 1251)).